Reading from the N-terminus, the 367-residue chain is MLEFPLINDTSRKIIHIDMDAFFAQVEMRDDPSLKDKPVIIGNDPRKTGGRGVVSTCNYEAKKYGVHSAMSSKEAYERCPNAVFISGNYSHYREVGMQIREIFKCYTDLVEPMSIDEAYLDVTTNKLGIKSAVKVAKLIQYDIWQELHLTCSAGVSYNKFIAKLASDFQKPAGLTVVLPEEAQEFLKKLPIAKFHGVGKKSVERLHDMDIYTGADLLKISEITLIDRFGRFGFDLFRKARGISNSPVKPNRVRKSIGSERTYGKLLYNEDDIKAELTKNAKRVAESAQKAKKVGRIIVIKVRYSDFSTLTKRMTLDKSTQDFDTIDRISHSIFDQLEENSSGVRLLGVTLTGLEDQEGRQLDLDDLA.

Residues 14 to 198 (IIHIDMDAFF…LPIAKFHGVG (185 aa)) enclose the UmuC domain. Residues D18 and D116 each contribute to the Mg(2+) site. E117 is a catalytic residue.

It belongs to the DNA polymerase type-Y family. Monomer. Requires Mg(2+) as cofactor.

The protein localises to the cytoplasm. It carries out the reaction DNA(n) + a 2'-deoxyribonucleoside 5'-triphosphate = DNA(n+1) + diphosphate. Its function is as follows. Poorly processive, error-prone DNA polymerase involved in untargeted mutagenesis. Copies undamaged DNA at stalled replication forks, which arise in vivo from mismatched or misaligned primer ends. These misaligned primers can be extended by PolIV. Exhibits no 3'-5' exonuclease (proofreading) activity. May be involved in translesional synthesis, in conjunction with the beta clamp from PolIII. The chain is DNA polymerase IV from Streptococcus thermophilus (strain ATCC BAA-491 / LMD-9).